We begin with the raw amino-acid sequence, 162 residues long: AP-1 complex subunit sigma-1 (162 aa).

Belongs to the adaptor complexes small subunit family. As to quaternary structure, adaptor protein complex 1 (AP-1) is a heterotetramer composed of two large adaptins (gamma-type subunit apl4 and beta-type subunit apl2), a medium adaptin (mu-type subunit apm1) and a small adaptin (sigma-type subunit aps1). AP-1 interacts with clathrin.

The protein localises to the cytoplasm. It localises to the nucleus. Its subcellular location is the cytoplasmic vesicle. The protein resides in the clathrin-coated vesicle membrane. It is found in the endosome. The protein localises to the golgi apparatus. In terms of biological role, component of the AP-1 complex which links clathrin to receptors in coated vesicles. Clathrin-associated protein complexes are believed to interact with the cytoplasmic tails of membrane proteins, leading to their selection and concentration. The sequence is that of AP-1 complex subunit sigma-1 (vas2) from Schizosaccharomyces pombe (strain 972 / ATCC 24843) (Fission yeast).